Here is a 488-residue protein sequence, read N- to C-terminus: MSNTNFSTSRSSKSIPELPNLEALRSLWPPPSLNESGDTRSVWTTHTGEPVASSVLSTSGSNNFSSPLKRPAPESHDAPIGRRLMVDDPRLIKHGKYDFSRHCTDYGHSYEWPYFRSLRRESMLYHTSGSYPESQPPYSSYSTDAPHYYHAGSESSAYYDSRSRLHGIQPPPKRRTLSPPPRRLADPVVVGSSRYVEEEVYRRPPYTLASEVPSSASAYQAGYSSYPVRSSPQLSHEDTRHGIASSGSTRYPFVPANTRASHSPSLLEPYAHSLPSSVAPVGAYPEKSSYLLSNSSNDSASRKEKPKARASTPPPLNFSRASEHRNEKGERISMINPRVVLDENGISHRSRYFIMLCDNETAIAHAKKTSIWAVKKDSSKRISDAYKKASVYFIFVAQQTYNALGYAQVVSDLNSTELPFWSDSSHAGGVRIKWIKTCNLFSAEISEIVSHMDHGSEARDGMEMMYDEGSRLCTLINYAIMKRIGRDR.

3 stretches are compositionally biased toward polar residues: residues 1–14 (MSNTNFSTSRSSKS), 33–47 (LNESGDTRSVWTTHT), and 54–66 (SVLSTSGSNNFSS). Disordered regions lie at residues 1 to 20 (MSNTNFSTSRSSKSIPELPN) and 25 to 80 (RSLW…DAPI). Basic and acidic residues predominate over residues 71 to 80 (PAPESHDAPI). Positions 95-122 (GKYDFSRHCTDYGHSYEWPYFRSLRRES) are interaction with erh1. 2 disordered regions span residues 163-185 (SRLHGIQPPPKRRTLSPPPRRLA) and 225-261 (SYPVRSSPQLSHEDTRHGIASSGSTRYPFVPANTRAS). T176 is modified (phosphothreonine). S178, S230, S231, S261, S263, and S265 each carry phosphoserine. Positions 289–299 (SYLLSNSSNDS) are enriched in low complexity. A disordered region spans residues 289–328 (SYLLSNSSNDSASRKEKPKARASTPPPLNFSRASEHRNEK). Position 311 is a phosphoserine (S311). At T312 the chain carries Phosphothreonine. One can recognise a YTH domain in the interval 350 to 476 (SRYFIMLCDN…DEGSRLCTLI (127 aa)).

In terms of assembly, component of the erh1-mmi1 complex composed of mmi1 and erh1. Interacts (via N-terminus) with erh1 in a 2:2 stoichiometry. Interacts with rrp6.

Its subcellular location is the nucleus. RNA-binding protein that recognizes and binds N6-methyladenosine (m6A)-containing RNAs, a modification present at internal sites of mRNAs and some non-coding RNAs. Functions alone and as part of the erh1-mmi1 complex, to recruit the CCR4-NOT complex and the NURS complex to target RNAs. Suppresses the meiotic program during vegetative growth and promotes the meiotic program during mating. Binds to DSR (determinant of selective removal) regions in meiotic mRNA, and recruits the NURS complex to targets. Recruitment of NURS complex to target mRNAs promotes mRNA decay by engagement of the nuclear exosome, and formation of heterochromatin islands at meiotic genes silenced by the exosome. Recruitment of the CCR4-NOT complex to target RNAs promotes heterochromatin formation at RNAi-dependent heterochromatin domains (HOODs), including a subset of meiotic genes, lncRNAs and retrotransposons. Recruitment of the CCR4-NOT complex to rDNA promotes rDNA heterochromatin assembly. Promotes non-canonical transcription termination at meiotic genes and prevents lncRNA transcription from invading and repressing adjacent genes. The protein is RNA binding exosome specificity factor Mmi1 (mmi1) of Schizosaccharomyces pombe (strain 972 / ATCC 24843) (Fission yeast).